The primary structure comprises 138 residues: Acidic phospholipase A2 1 (138 aa).

A signal peptide spans 1–16 (MRTLWIVAVWLMGVEG). Intrachain disulfides connect cysteine 42–cysteine 131, cysteine 44–cysteine 60, cysteine 59–cysteine 111, cysteine 65–cysteine 138, cysteine 66–cysteine 104, cysteine 73–cysteine 97, and cysteine 91–cysteine 102. Positions 43, 45, and 47 each coordinate Ca(2+). Histidine 63 is an active-site residue. Aspartate 64 provides a ligand contact to Ca(2+). The active site involves aspartate 105.

Monomer. It depends on Ca(2+) as a cofactor. In terms of tissue distribution, expressed by the venom gland.

It is found in the secreted. It catalyses the reaction a 1,2-diacyl-sn-glycero-3-phosphocholine + H2O = a 1-acyl-sn-glycero-3-phosphocholine + a fatty acid + H(+). Its function is as follows. Snake venom phospholipase that inhibits ADP- and collagen-induced human platelet aggregation. This inhibition is completely inhibited by abolition of catalytic activity in case of collagen as inducer and partially inhibited in case of ADP as inducer. PLA2 catalyzes the calcium-dependent hydrolysis of the 2-acyl groups in 3-sn-phosphoglycerides. This Macrovipera lebetinus (Levantine viper) protein is Acidic phospholipase A2 1.